Here is a 237-residue protein sequence, read N- to C-terminus: Carboxy-S-adenosyl-L-methionine synthase (237 aa).

Residues Tyr-40, Gly-65–Ser-67, Asp-116–Ile-117, Asn-131, and Arg-194 contribute to the S-adenosyl-L-methionine site.

The protein belongs to the class I-like SAM-binding methyltransferase superfamily. Cx-SAM synthase family. Homodimer.

It catalyses the reaction prephenate + S-adenosyl-L-methionine = carboxy-S-adenosyl-L-methionine + 3-phenylpyruvate + H2O. Functionally, catalyzes the conversion of S-adenosyl-L-methionine (SAM) to carboxy-S-adenosyl-L-methionine (Cx-SAM). The sequence is that of Carboxy-S-adenosyl-L-methionine synthase from Dichelobacter nodosus (strain VCS1703A).